The following is a 579-amino-acid chain: Peptidoglycan D,D-transpeptidase FtsI (579 aa).

A helical transmembrane segment spans residues 15-35 (FCVIVGLLLAMVGAIVWRIVD). Ser294 (acyl-ester intermediate) is an active-site residue. The segment at 558–579 (DNLPTATEQQQVNAAPAKGGRG) is disordered. A compositionally biased stretch (polar residues) spans 561–570 (PTATEQQQVN).

The protein belongs to the transpeptidase family. FtsI subfamily.

Its subcellular location is the cell inner membrane. It carries out the reaction Preferential cleavage: (Ac)2-L-Lys-D-Ala-|-D-Ala. Also transpeptidation of peptidyl-alanyl moieties that are N-acyl substituents of D-alanine.. It participates in cell wall biogenesis; peptidoglycan biosynthesis. Functionally, catalyzes cross-linking of the peptidoglycan cell wall at the division septum. Binds penicillin. The protein is Peptidoglycan D,D-transpeptidase FtsI of Pseudomonas aeruginosa (strain ATCC 15692 / DSM 22644 / CIP 104116 / JCM 14847 / LMG 12228 / 1C / PRS 101 / PAO1).